Consider the following 3391-residue polypeptide: Genome polyprotein (3391 aa).

The segment at 1–15 (MNDQRKEAKNTPFNM) is interaction with host EXOC1. Residues 1–101 (MNDQRKEAKN…LNILNRRRRS (101 aa)) are Cytoplasmic-facing. The hydrophobic; homodimerization of capsid protein C stretch occupies residues 37 to 72 (MLQGRGPLKLYMALVAFLRFLTIPPTAGILKRWGTI). The propeptide at 101–114 (SAGMIIMLIPTVMA) is ER anchor for the Capsid protein C, removed in mature form by serine protease NS3. The propeptide at 101–114 (SAGMIIMLIPTVMA) is ER anchor for the capsid protein C, removed in mature form by serine protease NS3. A helical transmembrane segment spans residues 102-122 (AGMIIMLIPTVMAFHLTTRNG). The Extracellular segment spans residues 123 to 242 (EPHMIVSRQE…HVQRIETWIL (120 aa)). The N-linked (GlcNAc...) asparagine; by host glycan is linked to asparagine 183. The chain crosses the membrane as a helical span at residues 243–260 (RHPGFTMMAAILAYTIGT). Position 261 (threonine 261) is a topological domain, cytoplasmic. The chain crosses the membrane as a helical span at residues 262-280 (HFQRALILILLTAVTPSMT). At 281–727 (MRCIGMSNRD…QVFGAIYGAA (447 aa)) the chain is on the extracellular side. 4 cysteine pairs are disulfide-bonded: cysteine 283-cysteine 310, cysteine 340-cysteine 401, cysteine 354-cysteine 385, and cysteine 372-cysteine 396. N-linked (GlcNAc...) asparagine; by host glycosylation is present at asparagine 347. The interval 378–391 (DRGWGNGCGLFGKG) is fusion peptide. A glycan (N-linked (GlcNAc...) asparagine; by host) is linked at asparagine 433. 2 cysteine pairs are disulfide-bonded: cysteine 465–cysteine 565 and cysteine 582–cysteine 613. The chain crosses the membrane as a helical span at residues 728–748 (FSGVSWTMKILIGVIITWIGM). The Cytoplasmic segment spans residues 749-752 (NSRS). Residues 753 to 773 (TSLSVTLVLVGIVTLYLGVMV) form a helical membrane-spanning segment. Over 774 to 1195 (QADSGCVVSW…MVGATMTDDI (422 aa)) the chain is Extracellular. Cystine bridges form between cysteine 779/cysteine 790, cysteine 830/cysteine 918, cysteine 954/cysteine 998, cysteine 1055/cysteine 1104, cysteine 1066/cysteine 1088, and cysteine 1087/cysteine 1091. 2 N-linked (GlcNAc...) asparagine; by host glycosylation sites follow: asparagine 905 and asparagine 982. Asparagine 1134 carries an N-linked (GlcNAc...) asparagine; by host glycan. A helical membrane pass occupies residues 1196-1220 (GMGVTYLALLAAFKVRPTFAAGLLL). At 1221-1226 (RKLTSK) the chain is on the cytoplasmic side. A helical transmembrane segment spans residues 1227–1245 (ELMMTTIGIVLSSQSTIPE). Residues 1246–1269 (TILELTDALALGMMVLKMVRNMEK) are Lumenal-facing. Residues 1270 to 1290 (YQLAVTIMAILCVPNAVILQN) traverse the membrane as a helical segment. Residue alanine 1291 is a topological domain, cytoplasmic. A helical membrane pass occupies residues 1292–1310 (WKVSCTILAVVSVSPLFLT). Residues 1311–1317 (SSQQKTD) lie on the Lumenal side of the membrane. The helical transmembrane segment at 1318–1338 (WIPLALTIKGLNPTAIFLTTL) threads the bilayer. Over 1339-1346 (SRTSKKRS) the chain is Cytoplasmic. The helical transmembrane segment at 1347-1367 (WPLNEAIMAVGMVSILASSLL) threads the bilayer. Over 1368–1370 (KND) the chain is Lumenal. Residues 1371-1391 (IPMTGPLVAGGLLTVCYVLTG) traverse the membrane as a helical segment. Topologically, residues 1392–1447 (RSADLELERAADVKWEDQAEISGSSPILSITISEDGSMSIKNEEEEQTLTILIRRG) are cytoplasmic. The tract at residues 1398-1437 (LERAADVKWEDQAEISGSSPILSITISEDGSMSIKNEEEE) is interacts with and activates NS3 protease. The segment at residues 1448–1468 (LLVISGLFPVSIPITAAAWYL) is an intramembrane region (helical). Residues 1469 to 2147 (WEVKKQRAGV…LSELPETLET (679 aa)) lie on the Cytoplasmic side of the membrane. The Peptidase S7 domain occupies 1476–1653 (AGVLWDVPSP…EKSIEDNPEI (178 aa)). Residues histidine 1526, aspartate 1550, and serine 1610 each act as charge relay system; for serine protease NS3 activity in the active site. The Helicase ATP-binding domain maps to 1655 to 1811 (DDIFRKRRLT…QSNAPIIDEE (157 aa)). The tract at residues 1659-1662 (RKRR) is important for RNA-binding. 1668–1675 (LHPGAGKT) is a binding site for ATP. A DEAH box motif is present at residues 1759-1762 (DEAH). One can recognise a Helicase C-terminal domain in the interval 1821 to 1988 (SGHEWVTDFK…IIPSMFEPER (168 aa)). An N6-acetyllysine; by host modification is found at lysine 1863. A helical membrane pass occupies residues 2148–2168 (LLLLTLLATVTGGIFLFLMSA). The Lumenal segment spans residues 2169–2170 (RG). The segment at residues 2171–2191 (IGKMTLGMCCIITASILLWYA) is an intramembrane region (helical). A topological domain (lumenal) is located at residue glutamine 2192. A helical membrane pass occupies residues 2193–2213 (IQPHWIAASIILEFFLIVLLI). Over 2214 to 2228 (PEPEKQRTPQDNQLT) the chain is Cytoplasmic. The chain crosses the membrane as a helical span at residues 2229-2249 (YVVIAILTVVAATMANEMGFL). At 2250 to 2274 (EKTKKDLGLGSIATQQPESNILDID) the chain is on the lumenal side. An intramembrane region (helical) is located at residues 2275 to 2295 (LRPASAWTLYAVATTFVTPML). The Lumenal portion of the chain corresponds to 2296–2316 (RHSIENSSVNVSLTAIANQAT). Asparagine 2301 and asparagine 2305 each carry an N-linked (GlcNAc...) asparagine; by host glycan. The segment at residues 2317–2337 (VLMGLGKGWPLSKMDIGVPLL) is an intramembrane region (helical). Residues 2338–2347 (AIGCYSQVNP) are Lumenal-facing. Residues 2348-2368 (TTLTAALFLLVAHYAIIGPAL) form a helical membrane-spanning segment. The Cytoplasmic segment spans residues 2369 to 2413 (QAKASREAQKRAAAGIMKNPTVDGITVIDLDPIPYDPKFEKQLGQ). Residues 2414–2434 (VMLLVLCVTQVLMMRTTWALC) traverse the membrane as a helical segment. The Lumenal portion of the chain corresponds to 2435-2459 (EALTLATGPISTLSEGNPGRFWNTT). Asparagine 2457 carries an N-linked (GlcNAc...) asparagine; by host glycan. The chain crosses the membrane as a helical span at residues 2460-2480 (IAVSMANIFRGSYLAGAGLLF). Topologically, residues 2481–3391 (SIMKNTTNTR…REEEEAGVLW (911 aa)) are cytoplasmic. One can recognise an mRNA cap 0-1 NS5-type MT domain in the interval 2493 to 2755 (TGNIGETLGE…DVDLGSGTRN (263 aa)). Serine 2547 lines the S-adenosyl-L-methionine pocket. Serine 2547 carries the post-translational modification Phosphoserine. Lysine 2552 functions as the For 2'-O-MTase activity in the catalytic mechanism. Residues 2568–2571 (VVDL) carry the SUMO-interacting motif motif. S-adenosyl-L-methionine contacts are provided by glycine 2577, tryptophan 2578, threonine 2595, lysine 2596, aspartate 2622, and valine 2623. The active-site For 2'-O-MTase activity is aspartate 2637. S-adenosyl-L-methionine is bound at residue isoleucine 2638. Catalysis depends on for 2'-O-MTase activity residues lysine 2672 and glutamate 2708. S-adenosyl-L-methionine is bound at residue tyrosine 2710. Zn(2+) is bound by residues glutamate 2929, histidine 2933, cysteine 2938, and cysteine 2941. Residues 3020-3169 (AMYADDTAGW…PLDDRLPSAL (150 aa)) form the RdRp catalytic domain. Residues histidine 3203, cysteine 3219, and cysteine 3338 each coordinate Zn(2+).

This sequence in the N-terminal section; belongs to the class I-like SAM-binding methyltransferase superfamily. mRNA cap 0-1 NS5-type methyltransferase family. Homodimer. Interacts (via N-terminus) with host EXOC1 (via C-terminus); this interaction results in EXOC1 degradation through the proteasome degradation pathway. As to quaternary structure, forms heterodimers with envelope protein E in the endoplasmic reticulum and Golgi. In terms of assembly, homodimer; in the endoplasmic reticulum and Golgi. Interacts with protein prM. Interacts with non-structural protein 1. Homodimer; Homohexamer when secreted. Interacts with envelope protein E. Interacts with host PRKAA1. As to quaternary structure, interacts (via N-terminus) with serine protease NS3. In terms of assembly, forms a heterodimer with serine protease NS3. May form homooligomers. Forms a heterodimer with NS2B. Interacts with NS4B. Interacts with unphosphorylated RNA-directed RNA polymerase NS5; this interaction stimulates RNA-directed RNA polymerase NS5 guanylyltransferase activity. Interacts with host SHFL. As to quaternary structure, interacts with host MAVS; this interaction inhibits the synthesis of IFN-beta. Interacts with host SHFL. Interacts with host AUP1; the interaction occurs in the presence of Dengue virus NS4B and induces lipophagy which facilitates production of virus progeny particles. May interact with host SRPRA and SEC61G. In terms of assembly, interacts with serine protease NS3. Homodimer. Interacts with host STAT2; this interaction inhibits the phosphorylation of the latter, and, when all viral proteins are present (polyprotein), targets STAT2 for degradation. Interacts with serine protease NS3. Interacts with host PAF1 complex; the interaction may prevent the recruitment of the PAF1 complex to interferon-responsive genes, and thus reduces the immune response. In terms of processing, specific enzymatic cleavages in vivo yield mature proteins. Cleavages in the lumen of endoplasmic reticulum are performed by host signal peptidase, whereas cleavages in the cytoplasmic side are performed by serine protease NS3. Signal cleavage at the 2K-4B site requires a prior NS3 protease-mediated cleavage at the 4A-2K site. Cleaved in post-Golgi vesicles by a host furin, releasing the mature small envelope protein M, and peptide pr. This cleavage is incomplete as up to 30% of viral particles still carry uncleaved prM. Post-translationally, N-glycosylated. In terms of processing, N-glycosylated. The excreted form is glycosylated and this is required for efficient secretion of the protein from infected cells. Acetylated by host KAT5. Acetylation modulates NS3 RNA-binding and unwinding activities and plays an important positive role for viral replication. Post-translationally, sumoylation of RNA-directed RNA polymerase NS5 increases NS5 protein stability allowing proper viral RNA replication. In terms of processing, phosphorylated on serines residues. This phosphorylation may trigger NS5 nuclear localization.

The protein resides in the virion. It is found in the host nucleus. Its subcellular location is the host cytoplasm. It localises to the host perinuclear region. The protein localises to the secreted. The protein resides in the virion membrane. It is found in the host endoplasmic reticulum membrane. Its subcellular location is the host mitochondrion. It catalyses the reaction Selective hydrolysis of -Xaa-Xaa-|-Yaa- bonds in which each of the Xaa can be either Arg or Lys and Yaa can be either Ser or Ala.. The catalysed reaction is RNA(n) + a ribonucleoside 5'-triphosphate = RNA(n+1) + diphosphate. It carries out the reaction a ribonucleoside 5'-triphosphate + H2O = a ribonucleoside 5'-diphosphate + phosphate + H(+). The enzyme catalyses ATP + H2O = ADP + phosphate + H(+). It catalyses the reaction a 5'-end (5'-triphosphoguanosine)-ribonucleoside in mRNA + S-adenosyl-L-methionine = a 5'-end (N(7)-methyl 5'-triphosphoguanosine)-ribonucleoside in mRNA + S-adenosyl-L-homocysteine. The catalysed reaction is a 5'-end (N(7)-methyl 5'-triphosphoguanosine)-ribonucleoside in mRNA + S-adenosyl-L-methionine = a 5'-end (N(7)-methyl 5'-triphosphoguanosine)-(2'-O-methyl-ribonucleoside) in mRNA + S-adenosyl-L-homocysteine + H(+). In terms of biological role, plays a role in virus budding by binding to the cell membrane and gathering the viral RNA into a nucleocapsid that forms the core of a mature virus particle. During virus entry, may induce genome penetration into the host cytoplasm after hemifusion induced by the surface proteins. Can migrate to the cell nucleus where it modulates host functions. Overcomes the anti-viral effects of host EXOC1 by sequestering and degrading the latter through the proteasome degradation pathway. Functionally, inhibits RNA silencing by interfering with host Dicer. Its function is as follows. Prevents premature fusion activity of envelope proteins in trans-Golgi by binding to envelope protein E at pH6.0. After virion release in extracellular space, gets dissociated from E dimers. Acts as a chaperone for envelope protein E during intracellular virion assembly by masking and inactivating envelope protein E fusion peptide. prM is the only viral peptide matured by host furin in the trans-Golgi network probably to avoid catastrophic activation of the viral fusion activity in acidic Golgi compartment prior to virion release. prM-E cleavage is inefficient, and many virions are only partially matured. These uncleaved prM would play a role in immune evasion. In terms of biological role, may play a role in virus budding. Exerts cytotoxic effects by activating a mitochondrial apoptotic pathway through M ectodomain. May display a viroporin activity. Functionally, binds to host cell surface receptor and mediates fusion between viral and cellular membranes. Envelope protein is synthesized in the endoplasmic reticulum in the form of heterodimer with protein prM. They play a role in virion budding in the ER, and the newly formed immature particle is covered with 60 spikes composed of heterodimer between precursor prM and envelope protein E. The virion is transported to the Golgi apparatus where the low pH causes dissociation of PrM-E heterodimers and formation of E homodimers. prM-E cleavage is inefficient, and many virions are only partially matured. These uncleaved prM would play a role in immune evasion. Its function is as follows. Involved in immune evasion, pathogenesis and viral replication. Once cleaved off the polyprotein, is targeted to three destinations: the viral replication cycle, the plasma membrane and the extracellular compartment. Essential for viral replication. Required for formation of the replication complex and recruitment of other non-structural proteins to the ER-derived membrane structures. Excreted as a hexameric lipoparticle that plays a role against host immune response. Antagonizing the complement function. Binds to the host macrophages and dendritic cells. Inhibits signal transduction originating from Toll-like receptor 3 (TLR3). Mediates complement activation, which may contribute to the pathogenesis of the vascular leakage that occurs in severe dengue disease. Activates autophagy through the AMPK/ERK/mTOR signaling pathway. Mechanistically, acts as the assembly platform for STK11-AMPK interactions and promotes STK11-AMPK interactions. In turn, promotes phosphorylation of the AMPK kinase structural domain and activates AMPK, thereby positively regulating the AMPK/ERK/mTOR signaling pathway and inducing autophagy. Disrupts the host endothelial glycocalyx layer of host pulmonary microvascular endothelial cells, inducing degradation of sialic acid and shedding of heparan sulfate proteoglycans. NS1 induces expression of sialidases, heparanase, and activates cathepsin L, which activates heparanase via enzymatic cleavage. These effects are probably linked to the endothelial hyperpermeability observed in severe dengue disease. In terms of biological role, component of the viral RNA replication complex that functions in virion assembly and antagonizes the host immune response. Functionally, required cofactor for the serine protease function of NS3. May have membrane-destabilizing activity and form viroporins. Its function is as follows. Displays three enzymatic activities: serine protease, NTPase and RNA helicase. NS3 serine protease, in association with NS2B, performs its autocleavage and cleaves the polyprotein at dibasic sites in the cytoplasm: C-prM, NS2A-NS2B, NS2B-NS3, NS3-NS4A, NS4A-2K and NS4B-NS5. NS3 RNA helicase binds RNA and unwinds dsRNA in the 3' to 5' direction. Regulates the ATPase activity of the NS3 helicase activity. NS4A allows NS3 helicase to conserve energy during unwinding. Plays a role in the inhibition of the host innate immune response. Interacts with host MAVS and thereby prevents the interaction between RIGI and MAVS. In turn, IFN-beta production is impaired. Interacts with host AUP1 which mediates induction of lipophagy in host cells and facilitates production of virus progeny particles. In terms of biological role, functions as a signal peptide for NS4B and is required for the interferon antagonism activity of the latter. Functionally, induces the formation of ER-derived membrane vesicles where the viral replication takes place. Inhibits interferon (IFN)-induced host STAT1 phosphorylation and nuclear translocation, thereby preventing the establishment of cellular antiviral state by blocking the IFN-alpha/beta pathway. Its function is as follows. Replicates the viral (+) and (-) RNA genome, and performs the capping of genomes in the cytoplasm. NS5 methylates viral RNA cap at guanine N-7 and ribose 2'-O positions. Besides its role in RNA genome replication, also prevents the establishment of cellular antiviral state by blocking the interferon-alpha/beta (IFN-alpha/beta) signaling pathway. Inhibits host TYK2 and STAT2 phosphorylation, thereby preventing activation of JAK-STAT signaling pathway. May reduce immune responses by preventing the recruitment of the host PAF1 complex to interferon-responsive genes. In Dengue virus type 2 (strain 16681-PDK53) (DENV-2), this protein is Genome polyprotein.